We begin with the raw amino-acid sequence, 183 residues long: Ribosome-recycling factor (183 aa).

It belongs to the RRF family.

It is found in the cytoplasm. Its function is as follows. Responsible for the release of ribosomes from messenger RNA at the termination of protein biosynthesis. May increase the efficiency of translation by recycling ribosomes from one round of translation to another. The polypeptide is Ribosome-recycling factor (Deinococcus deserti (strain DSM 17065 / CIP 109153 / LMG 22923 / VCD115)).